The sequence spans 433 residues: Methylenetetrahydrofolate--tRNA-(uracil-5-)-methyltransferase TrmFO (433 aa).

FAD is bound at residue 8–13 (GAGLAG).

The protein belongs to the MnmG family. TrmFO subfamily. Requires FAD as cofactor.

The protein localises to the cytoplasm. It carries out the reaction uridine(54) in tRNA + (6R)-5,10-methylene-5,6,7,8-tetrahydrofolate + NADH + H(+) = 5-methyluridine(54) in tRNA + (6S)-5,6,7,8-tetrahydrofolate + NAD(+). It catalyses the reaction uridine(54) in tRNA + (6R)-5,10-methylene-5,6,7,8-tetrahydrofolate + NADPH + H(+) = 5-methyluridine(54) in tRNA + (6S)-5,6,7,8-tetrahydrofolate + NADP(+). Catalyzes the folate-dependent formation of 5-methyl-uridine at position 54 (M-5-U54) in all tRNAs. The chain is Methylenetetrahydrofolate--tRNA-(uracil-5-)-methyltransferase TrmFO from Carboxydothermus hydrogenoformans (strain ATCC BAA-161 / DSM 6008 / Z-2901).